A 971-amino-acid chain; its full sequence is Polyamine-modulated factor 1-binding protein 1 (971 aa).

6 coiled-coil regions span residues 37–69 (NKQY…LQAS), 117–229 (EKLH…ACSN), 282–325 (LHVE…LREE), 355–680 (QKLS…SAIQ), 706–827 (QDDL…DEKE), and 879–916 (IAKL…KAGT).

As to expression, expressed in testis and more specifically in ODF, the sperm tail specific cytoskeletal structure. Also expressed in epididymides and brain.

Its subcellular location is the cell projection. The protein localises to the cilium. The protein resides in the flagellum. In terms of biological role, required for normal spermatogenesis. It functions as a scaffold protein that attaches the sperm head-tail connecting piece to the nuclear envelope, thus maintaining sperm head and tail integrity. May also be involved in the general organization of cellular cytoskeleton. The polypeptide is Polyamine-modulated factor 1-binding protein 1 (Pmfbp1) (Rattus norvegicus (Rat)).